The sequence spans 64 residues: DNA gyrase inhibitor YacG (64 aa).

Zn(2+) contacts are provided by cysteine 7, cysteine 10, cysteine 26, and cysteine 30. A disordered region spans residues 43 to 64 (KRIPGPINPDLLPYPDEGEQWQ).

It belongs to the DNA gyrase inhibitor YacG family. Interacts with GyrB. Zn(2+) serves as cofactor.

Inhibits all the catalytic activities of DNA gyrase by preventing its interaction with DNA. Acts by binding directly to the C-terminal domain of GyrB, which probably disrupts DNA binding by the gyrase. This is DNA gyrase inhibitor YacG from Aeromonas salmonicida (strain A449).